We begin with the raw amino-acid sequence, 372 residues long: Cyclin-A3-2 (372 aa).

Positions 53 to 73 (NQKKETQKPKRNLKPPPAKQI) are disordered.

This sequence belongs to the cyclin family. Cyclin AB subfamily.

In Arabidopsis thaliana (Mouse-ear cress), this protein is Cyclin-A3-2 (CYCA3-2).